A 590-amino-acid chain; its full sequence is Putative histone-lysine N-methyltransferase PRDM6 (590 aa).

Positions 25 to 87 (QLFPHGGGGP…STPASSSTSA (63 aa)) are disordered. Positions 29-42 (HGGGGPLKGGGAAG) are enriched in gly residues. The span at 71–87 (ASLSSASSTPASSSTSA) shows a compositional bias: low complexity. The 120-residue stretch at 241–360 (REVCLCTSTV…RGTELLVWYN (120 aa)) folds into the SET domain. Residues 468-490 (WKCGQCFKTFTQRILLQMHVCTQ) form a C2H2-type 1; degenerate zinc finger. 2 C2H2-type zinc fingers span residues 496–518 (YQCG…VVTH) and 524–546 (FKCG…IRTH). The segment at 552–574 (FKCERCERSFTQATQLSRHQRMP) adopts a C2H2-type 4; degenerate zinc-finger fold.

This sequence belongs to the class V-like SAM-binding methyltransferase superfamily. Interacts with HDAC1, HDAC2, HDAC3, CBX1 and EP300.

It localises to the nucleus. It catalyses the reaction L-lysyl(20)-[histone H4] + S-adenosyl-L-methionine = N(6)-methyl-L-lysyl(20)-[histone H4] + S-adenosyl-L-homocysteine + H(+). Putative histone methyltransferase that acts as a transcriptional repressor of smooth muscle gene expression. Promotes the transition from differentiated to proliferative smooth muscle by suppressing differentiation and maintaining the proliferative potential of vascular smooth muscle cells. Also plays a role in endothelial cells by inhibiting endothelial cell proliferation, survival and differentiation. It is unclear whether it has histone methyltransferase activity in vivo. According to some authors, it does not act as a histone methyltransferase by itself and represses transcription by recruiting EHMT2/G9a. According to others, it possesses histone methyltransferase activity when associated with other proteins and specifically methylates 'Lys-20' of histone H4 in vitro. 'Lys-20' methylation represents a specific tag for epigenetic transcriptional repression. This chain is Putative histone-lysine N-methyltransferase PRDM6 (PRDM6), found in Bos taurus (Bovine).